Consider the following 58-residue polypeptide: Large ribosomal subunit protein bL32 (58 aa).

The protein belongs to the bacterial ribosomal protein bL32 family.

This is Large ribosomal subunit protein bL32 from Sulfurihydrogenibium sp. (strain YO3AOP1).